Consider the following 257-residue polypeptide: Small ribosomal subunit protein uS3 (257 aa).

Positions 39–112 (IRKFLNKKYN…EIVFNVVEVR (74 aa)) constitute a KH type-2 domain. The tract at residues 217-257 (HEELRKERQSSASSNHGGGKRRPSRKGPRRSQEDAATEGGN) is disordered. The span at 234–245 (GGKRRPSRKGPR) shows a compositional bias: basic residues.

This sequence belongs to the universal ribosomal protein uS3 family. Part of the 30S ribosomal subunit. Forms a tight complex with proteins S10 and S14.

Binds the lower part of the 30S subunit head. Binds mRNA in the 70S ribosome, positioning it for translation. This is Small ribosomal subunit protein uS3 from Haploplasma axanthum (Acholeplasma axanthum).